The sequence spans 557 residues: Copine-6 (557 aa).

2 C2 domains span residues 1 to 127 and 134 to 263; these read MSDP…TKPL and TAGK…MQWD. 5 residues coordinate Ca(2+): D167, D173, D229, D231, and D237. A linker region region spans residues 244-303; it reads STFQEMQEGTANPGQEMQWDCINPKYRDKKKNYKSSGTVVLAQCTVEKVHTFLDYIMGGC. Residues 306–526 enclose the VWFA domain; sequence SFTVAIDFTA…ALAKCVLAEV (221 aa).

This sequence belongs to the copine family. Interacts (via second C2 domain) with OS9 (via C-terminus); this interaction occurs in a calcium-dependent manner in vitro. May interact with NECAB1. Ca(2+) is required as a cofactor. Expressed in the brain. Expressed in pyramidal cells, granule cells, and neurons in the dentate gyrus of the hippocampus and in granule cells of the olfactory bulb (at protein level). Expressed in pyramidal cells of the CA1-CA3 regions, in granule cells of the dentate gyrus, in granule cells of the olfactory bulbs, in the mitral cell layer and in neurons of the cerebral cortex layer II, brainstem and spinal cord. Not detected in glial cells.

It is found in the cytoplasm. Its subcellular location is the cell membrane. The protein localises to the endosome. It localises to the cytoplasmic vesicle. The protein resides in the clathrin-coated vesicle. It is found in the perikaryon. Its subcellular location is the cell projection. The protein localises to the dendrite. Functionally, calcium-dependent phospholipid-binding protein that plays a role in calcium-mediated intracellular processes. Binds phospholipid membranes in a calcium-dependent manner. Plays a role in dendrite formation by melanocytes. In Mus musculus (Mouse), this protein is Copine-6.